The chain runs to 265 residues: Zwei Ig domain protein zig-1 (265 aa).

Residues 1 to 17 (MKNLLLITFFVVSTVTA) form the signal peptide. Residues 18–232 (LGGRGSKSAL…KMVDVRSEFQ (215 aa)) are Extracellular-facing. Ig-like C2-type domains are found at residues 41–108 (HATD…TPHG) and 120–220 (PVVH…MLLV). Residues asparagine 83 and asparagine 193 are each glycosylated (N-linked (GlcNAc...) asparagine). Residues cysteine 155 and cysteine 202 are joined by a disulfide bond. Residues 233 to 253 (WVYPLAVILITIFLLVVIIVF) form a helical membrane-spanning segment. Topologically, residues 254 to 265 (CEWRNKKSTSKA) are cytoplasmic.

Expressed in neurons and body wall muscles.

The protein resides in the cell membrane. Functionally, probably not involved in maintaining the position of ASI and ASH head neuron cell bodies and ventral nerve cord axons of PVQ, PVP, RMEV, AVK and HSN neurons. The protein is Zwei Ig domain protein zig-1 of Caenorhabditis elegans.